A 3977-amino-acid polypeptide reads, in one-letter code: MSVEEPIAVIGSGLRFPGSSTSPSKLWDLLTKPRDLLTRIPENRFNADAHHHPNPDHHGTLNVTESYFIDQDHRHFDANFFNIKAIEVSAIDPQQRLLMEVVYESLEAAGLSIESLAGSQTGVYVGQMCGDHSDLLNSDVNALPTYTATGNARSIMSNRISYFFDWHGPSMTIDTACSSSLVAVHQAVQLLRSGDSRVTVAAGTNMILAPMQYVGASKLHMLAADSRSRMWDVDASGYARGEGVAAVILKRLSDAIADGDNIECVIRSSGVNQDGRTKGITVPSSTAQRDLIFRTYAKAGLDPLNPKERCQYFEAHGTGTAAGDPKEAEAISQSFFYPDENVKSKDEVPLYVGSIKTVIGHTEGTAGLAGLIKASLALQHGVIPPNLLFNKLHPNIEPFYTNLEVPTSLKTWPALPEGIPRRASINSFGFGGTNAHVILENYTTPTPQETSSAASQQFTPFVFSAASEKSLRGILGDYMEYLSANPDVSLKDLSYTLYGRRSEHAIRTSFSASSVSDLQAKIKERVREGSNGQNIGVRAKVSSSMPRLLGVFTGQGAQWPTMSRELVLHSPYARKVVQELEAVLQTLPEPERPHWSLMDELLCDASKSRLDSAQIAQPLCTVVQIILFDLIQAAGVKFEAVVGHSSGEIAAAYAAGCITRDDAVKIAYYRGYFTHHTPSSKPGAMMAAGTSFEDANELCNLPMFKGRLAVAAINSSTSVTISGDRDAIEQAKEILEDEQKFARLLKVDKAYHSSHMIPCSTGYVEALKGCNIQPQQGAKDCTWYSSTYEKREMHGDEDLAGQYWADNMVRPVLFSQAVVSASAGGAFDLGVEVGPHPALKGPAVQTIQETQKDPILYTGVIHRGKNDTEAVSDALGYIWSQLSTYKLDLRSFDSLVSGDNSRSVVPDLPTYHWDHDTLYWHNTRASKAFLGRKTGTNPLLGTRTTDIMEHEMRWRNLLRLNEKPWINGHQLQGQVVYPATAYIATAVEAARFIVPNEEDVAVIEVHDFSLGKPLVFSEGDSGIETVFAVDGITMTSENTYSASFVFHASSSAEADQLSTHATGRITVTLGESSSSLFPTRQPDLPNLVSIPQDRFYASLEPLGYSYSGWFRTLSSIKRRMNFSSSQITVPPQDDEPEKMLLHPALLDSALQGIFLAYCWPGDGSLEQLHVPTGIKTFRVNAGLCRQTLIPSSDVSACSQLTSNPIATRQLNGDVEIYAPDGTGLVQMEGIKVVAFSEATADMDRAIFSENVWGVAAPSCELVMGDQRATEEDYEFSYAMERVSINYMKKTVEEFPEEKRKTMGLEWHFERMFDFFNDVLTTVKAGSRSCAQSEWVNDDKETIAALKAKHGHRVDMQLACQVGDHLAPVLRGETTILEHMTKDNLLNRFYEVGLGLKEFSYLLGKTVKQVVHRDPRMKILEIGAGTGGATKLIMSDIGRSFASYTYTDISTGFFETAQEVFSLFSDKMIFKTLDIEKDIVQQGYEEHTYDLVVASLVLHATTDIHRTLTNARRLLKPGGQLIILEVSNNDVSRVGFMMCALPGWWLGQNDGRTLSPCISTLEWHNALLQSGFSGIDSSTPESDAIPYPLAIIVSQAVDDRVALLREPLSAAGLQAAVDTELDLVLVGGQTLNTTRLVQGILRLLPTGTKHTIFKTLCDVDVAKVSPKSAILVLTELDEPVFKRLTDKALKGLQALFESQRTVLWITQGSRSENPFMNMSVGLGRSLVLENPDLTLQFLDLEVNSKPDPRSLLESLMRLRQGDILKRGGQLEELHWTNEHELAYENGNLVLSRVYQSKALNNRYNAFKRTITETVTLDSDSAPVKLSSDASSRHTLMHDASLASRLLDSQSLHGTGAEVLINVTHSLLAPIATRPDTAYLVLGVNLSTGASTIAVTPTNGSRALVSSEKSIEVTILPGNEISFLSSLAVELRSVSILSVCRPGSTLLVHEPTPAIASSILKRAGDTNIKVHFSTASQPKSADDWIFIDVYSPKRVVVASIPADVSTLVDCAARQGKNFSSCGSLIASCLPATSLQINLDGASPLQQMLEPSGAHSIQHLLPDVVQRALIETAESSAGQPVNELVTLDLEQLVGSDVDQSQQAIVSWTGTAKIPVQLSTVESQVKFRPDRTYVLFGLTSDLAQSICDWMASRGARNIVLTSRNPKIEYQWVELLAKKGVRLEAFANDITDKAALSTLVENLRHNYPPIAGICHGAMVLDDTSFFEMPFEKMQKVLGPKVKGAIFLDEIFQNDVLDFFVFFSSVTAIAGNRGQSAYTTANMFMSSLVTQRRQRGLAASILHIGAVMGVGYINRGFSDAIFAALRKTGFMMMSEREFHLCFAEAVVASHPCSDLNPEVITALETIRSTEVRPPWADFPRFQHCVQLEEAGDKKEKKKTAAVSVKIRLQEAVNASEVFEIISGAFFQKLQISLQLPSETEKAHVLASGLDDLGVDSLIAVEIRSWFGKEIETEIPVFKVLSGGSVAQLLEYAIDNMPAKLVPHSNGEQGTVSDSGSTNIQLTPASTPSVPSVNLASDSTGSSQVGEDVDSSVDMVVTPLETPFEDAEIKRTLSITEIEPPAEKTPPPNFEKIIPMSPGQSRFWFLKHLMKDQTTANSTILVAIDGNLRLDSLEDAVRKIAAHHEAFRTSFFTDENHKPVQAISALSRLFLERKVVASESQVKEEFEKLKNHVYDLEHGETLRLVHLCLTPTKSYLVIGSHHITLDGISLEVFLQTLQHAYNGQPLSKNTFQYSDYSEKLRQEISSGSLQSDIEYWKVELANHPPALPLLPFSSTKTRQPLEEYSHVSLNRIVPAALAKQIQETCHRLKANIFHFYLGVFEILLFKLLGTSDVCIGMADANRWDDRVAQSIGMYLNLLPLRFHLDSTQSFEAVLKETRRKAYLAMSHSRLPFDVLLENVECDRSTSFSPLFQAFINYRQGVSETRKFGGATGTTTEISLPRAGYDISLDIIENPGQDTRVTFMLQKTLYGEEETTKVLDLYFKLLGSVSRMSGQSLKDISLFSKEDIHNAVQLGQGPNSPSTWPATLPARIENIIAEHPDTISIKQVTGQSWSYQQLNAEVNRISSALLGAGVTKGSVVAVFQDASASQVFSLLAIYRIGAIYAPLDVNIPAERLQVIVAECKPSAVLVNESTVNNSSDLALPSSTHVLEVSSLPNGAHVPAANLTSSDPAAMLFTSGTSGVPKGVVLSHGNFRNHVESLTVTHGFGSETVLQQSSVGFDMSLNQIFIALANAGTLVIVPESLRKDFSSLSQIILDHRVTYTSATPSEYLAWYRHGADNLSKSGSWKFATSGGEKFSAELIDVFRQLSSQFLQSLRIFNAYGPTECSLSSNELEVNLNTPKITAGRTLPNYAVCIVDEDSNPQPIGFPGEIYISGAGVAIGYLNNTEETTRKFIKTSFSGKAYRTGDKGVLHADGALEILGRIDGDTQVKLRGLRIELQDVEKSILTASNGQLNEVVVTPVGTPTMLVAHAVLSSTVPTANTQSFLQELVSSLPLPQYMRPSFIRPIDRIPLTTSGKTDRKALQALGLPFASVQEEDEFSLTPTEDKLARVWDSILPLQSQGLHTLTSASDFFQVGGNSMLLIDLRNAVRREFDIDIPLLRLFEHSSISAMASLITPASSESSHSIDWASEVAIPPTLLSSQPKSSANCPHHPPQTVLLTGATGFLGHNVLKGLVEDSNITKIHCIAVRDSTKLASSIDSEKIVIHTGDLSLPRLGLSTAAFAALSNSADVIIHNGADVSFLKTYKTLRAANVEATKALVQIALPRKVPVHFVSTGTVGKLIGGESLEPTSLASYPPSEGFKDGYAATKWVSEVLLENVGNELGLPVVIHRPSSITGEGAGESDIVPNVVRYANLLKAAPESKGWTGFVDLVSVQNVVDGLLGSVTGDRGNGVQYIHHSGENVIPANRIGEMLQKDGKEEWDVLDMTEWVDKAIQKGMNPLIGEFLKNAGKGKGLQIGQRLLKE.

The Ketosynthase family 3 (KS3) domain maps to 4 to 441; that stretch reads EEPIAVIGSG…GTNAHVILEN (438 aa). Catalysis depends on for beta-ketoacyl synthase activity residues Cys177, His316, and His361. Residues 551 to 867 form the Malonyl-CoA:ACP transacylase (MAT) domain; that stretch reads VFTGQGAQWP…TGVIHRGKND (317 aa). Positions 937–1072 are N-terminal hotdog fold; the sequence is NPLLGTRTTD…GRITVTLGES (136 aa). The 305-residue stretch at 937-1241 folds into the PKS/mFAS DH domain; sequence NPLLGTRTTD…VVAFSEATAD (305 aa). Catalysis depends on His969, which acts as the Proton acceptor; for dehydratase activity. Positions 1087–1241 are C-terminal hotdog fold; it reads LVSIPQDRFY…VVAFSEATAD (155 aa). Residue Asp1147 is the Proton donor; for dehydratase activity of the active site. Residues 1286-1580 form a methyltransferase (cMeT) domain region; the sequence is YMKKTVEEFP…FSGIDSSTPE (295 aa). The region spanning 2128 to 2301 is the Ketoreductase (KR) domain; sequence TYVLFGLTSD…AASILHIGAV (174 aa). The 82-residue stretch at 2409 to 2490 folds into the Carrier 1 domain; the sequence is SEVFEIISGA…QLLEYAIDNM (82 aa). Ser2450 bears the O-(pantetheine 4'-phosphoryl)serine mark. The disordered stretch occupies residues 2497–2542; the sequence is HSNGEQGTVSDSGSTNIQLTPASTPSVPSVNLASDSTGSSQVGEDV. The segment covering 2499-2538 has biased composition (polar residues); that stretch reads NGEQGTVSDSGSTNIQLTPASTPSVPSVNLASDSTGSSQV. The condensation stretch occupies residues 2584–3018; sequence EKIIPMSPGQ…LKDISLFSKE (435 aa). The segment at 3048 to 3437 is adenylation; that stretch reads IAEHPDTISI…GALEILGRID (390 aa). The Carrier 2 domain maps to 3552–3632; sequence FSLTPTEDKL…AMASLITPAS (81 aa). Ser3592 carries the post-translational modification O-(pantetheine 4'-phosphoryl)serine. The 219-residue stretch at 3672–3890 folds into the Thioester reductase (TE) domain; that stretch reads LTGATGFLGH…FVDLVSVQNV (219 aa).

The protein in the C-terminal section; belongs to the NRP synthetase family. Pantetheine 4'-phosphate serves as cofactor.

It participates in mycotoxin biosynthesis. Functionally, hybrid PKS-NRPS synthetase; part of the gene cluster that mediates the biosynthesis of GKK1032, fungal natural products containing a macrocyclic para-cyclophane connected to a decahydrofluorene ring system that show potent antitumor activities. Within the pathway, the PKS-NRPS gkaA, with the help of the trans-enoyl reductase gkaC, synthesize the polyketide-tyrosyl acyl thioester product which can be reductively off-loaded by the terminal reductase (R) domain in gkaA. The PKS module of gkaA acts in combination with the trans-acting enoyl reductase gkaC to produce a methylated polyketide attached to the ACP domain. In parallel, the adenylation (A) domain of the NRPS module activated L-tyrosine, which is then transferred to the ACP domain. The condensation (C) domain subsequently links this group to the polyketide chain, forming an enzyme-bound amide. The alpha/beta hydrolase gkaG is then required to catalyze the subsequent Knoevenagel condensation that affords the 3-pyrrolin-2-one ring, whereas the three proteins gkaB, gkadX and gkaZ then function synergistically to form the cyclophane. The chain is Hybrid PKS-NRPS synthetase gkaA from Penicillium citrinum.